We begin with the raw amino-acid sequence, 438 residues long: ATP-dependent RNA helicase RhlB (438 aa).

Positions 9-37 (QRFADLPLHPEVKQALAENGFEFCTPIQA) match the Q motif motif. Residues 40 to 219 (LPVLLQSKDI…YDHMNEPVKV (180 aa)) form the Helicase ATP-binding domain. Residue 53–60 (AQTGTGKT) participates in ATP binding. Residues 165–168 (DEAD) carry the DEAD box motif. Residues 243-390 (KMRLLLTLIE…VSNYDSEALL (148 aa)) form the Helicase C-terminal domain. The interval 395-438 (TPAKIHRKHPSGTRNLRDRSGASRPGAQRSGARPPRHDRTRRHS) is disordered. A compositionally biased stretch (basic residues) spans 428–438 (PPRHDRTRRHS).

Belongs to the DEAD box helicase family. RhlB subfamily. Component of the RNA degradosome, which is a multiprotein complex involved in RNA processing and mRNA degradation.

Its subcellular location is the cytoplasm. It carries out the reaction ATP + H2O = ADP + phosphate + H(+). In terms of biological role, DEAD-box RNA helicase involved in RNA degradation. Has RNA-dependent ATPase activity and unwinds double-stranded RNA. This chain is ATP-dependent RNA helicase RhlB, found in Shewanella baltica (strain OS185).